The sequence spans 456 residues: Adenylosuccinate synthetase isozyme 2 (456 aa).

The span at 1-14 shows a compositional bias: polar residues; that stretch reads MSISESSPAATSLP. The tract at residues 1 to 24 is disordered; the sequence is MSISESSPAATSLPNGDCGRPRAR. GTP-binding positions include 39–45 and 67–69; these read GDEGKGK and GHT. Aspartate 40 acts as the Proton acceptor in catalysis. Mg(2+) contacts are provided by aspartate 40 and glycine 67. Aspartate 40 is a substrate binding site. IMP contacts are provided by residues 40–43, 65–68, threonine 162, arginine 176, asparagine 255, threonine 270, and arginine 334; these read DEGK and NAGH. Histidine 68 functions as the Proton donor in the catalytic mechanism. 330–336 lines the substrate pocket; it reads VTTGRKR. Residues arginine 336, 362-364, and 444-447 each bind GTP; these read KLD and GVGK.

This sequence belongs to the adenylosuccinate synthetase family. Homodimer. The cofactor is Mg(2+).

It localises to the cytoplasm. It is found in the mitochondrion. It carries out the reaction IMP + L-aspartate + GTP = N(6)-(1,2-dicarboxyethyl)-AMP + GDP + phosphate + 2 H(+). It participates in purine metabolism; AMP biosynthesis via de novo pathway; AMP from IMP: step 1/2. With respect to regulation, inhibited competitively by AMP and IMP and non-competitively by fructose 1,6-bisphosphate. Functionally, plays an important role in the de novo pathway and in the salvage pathway of purine nucleotide biosynthesis. Catalyzes the first committed step in the biosynthesis of AMP from IMP. The chain is Adenylosuccinate synthetase isozyme 2 (Adss2) from Mus musculus (Mouse).